Reading from the N-terminus, the 708-residue chain is Lactotransferrin (708 aa).

Residues 1–19 form the signal peptide; the sequence is MKLFVPALLSLGALGLCLA. 2 Transferrin-like domains span residues 25-352 and 364-693; these read VRWC…NLRE and VVWC…NLKK. Disulfide bonds link Cys-28–Cys-64 and Cys-38–Cys-55. Position 79 (Asp-79) interacts with Fe cation. The active site involves Lys-92. Tyr-111 serves as a coordination point for Fe cation. 5 disulfide bridges follow: Cys-134–Cys-217, Cys-176–Cys-192, Cys-179–Cys-202, Cys-189–Cys-200, and Cys-250–Cys-264. Hydrogencarbonate contacts are provided by Thr-136, Arg-140, Ala-142, and Gly-143. Fe cation is bound at residue Tyr-211. Residue Asn-252 is glycosylated (N-linked (GlcNAc...) (high mannose) asparagine). His-272 is a binding site for Fe cation. Ser-278 acts as the Nucleophile in catalysis. The N-linked (GlcNAc...) (hybrid) asparagine glycan is linked to Asn-300. 2 disulfide bridges follow: Cys-367/Cys-399 and Cys-377/Cys-390. The Fe cation site is built by Asp-414 and Tyr-452. 8 cysteine pairs are disulfide-bonded: Cys-424/Cys-703, Cys-444/Cys-666, Cys-476/Cys-551, Cys-500/Cys-694, Cys-510/Cys-524, Cys-521/Cys-534, Cys-592/Cys-606, and Cys-644/Cys-649. Residues Thr-478, Arg-482, Ala-484, and Gly-485 each coordinate hydrogencarbonate. An N-linked (GlcNAc...) (complex) asparagine; alternate glycan is attached at Asn-495. N-linked (GlcNAc...) (high mannose) asparagine; alternate glycosylation is present at Asn-495. Residue Asn-495 is glycosylated (N-linked (GlcNAc...) (hybrid) asparagine; alternate). Tyr-545 serves as a coordination point for Fe cation. The N-linked (GlcNAc...) (high mannose) asparagine glycan is linked to Asn-564. His-614 provides a ligand contact to Fe cation.

This sequence belongs to the transferrin family. In terms of assembly, monomer. Found in a complex with LTF, CLU, EPPIN and SEMG1. Found in a complex with MPO and LTF; interacts directly with CP, allows Fe(3+) incorporation into LTF and activation of CP ferroxidase activity. In terms of processing, poly-N-acetyllactosaminic carbohydrate moiety seems to be needed for TLR4 activation.

Its subcellular location is the secreted. It is found in the cytoplasmic granule. Transferrins are iron binding transport proteins which can bind two Fe(3+) ions in association with the binding of an anion, usually bicarbonate. In terms of biological role, major iron-binding and multifunctional protein found in exocrine fluids such as breast milk and mucosal secretions. Has antimicrobial activity, which depends on the extracellular cation concentration. Antimicrobial properties include bacteriostasis, which is related to its ability to sequester free iron and thus inhibit microbial growth, as well as direct bactericidal properties leading to the release of lipopolysaccharides from the bacterial outer membrane. Can also prevent bacterial biofilm development in P.aeruginosa infection. Has weak antifungal activity against C.albicans. Has anabolic, differentiating and anti-apoptotic effects on osteoblasts and can also inhibit osteoclastogenesis, possibly playing a role in the regulation of bone growth. Promotes binding of species C adenoviruses to epithelial cells, promoting adenovirus infection. Can inhibit papillomavirus infections. Stimulates the TLR4 signaling pathway leading to NF-kappa-B activation and subsequent pro-inflammatory cytokine production while also interfering with the lipopolysaccharide (LPS)-stimulated TLR4 signaling. Inhibits neutrophil granulocyte migration to sites of apoptosis, when secreted by apoptotic cells. Stimulates VEGFA-mediated endothelial cell migration and proliferation. Binds heparin, chondroitin sulfate and possibly other glycosaminoglycans (GAGs). Also binds specifically to pneumococcal surface protein A (PspA), the lipid A portion of bacterial lipopolysaccharide (LPS), lysozyme and DNA. Its function is as follows. Lactoferricin binds to the bacterial surface and is crucial for the bactericidal functions. Has some antiviral activity against papillomavirus infection. N-terminal region shows strong antifungal activity against C.albicans. Contains two BBXB heparin-binding consensus sequences that appear to form the predominate functional GAG-binding site. Functionally, the lactotransferrin transferrin-like domain 1 functions as a serine protease of the peptidase S60 family that cuts arginine rich regions. This function contributes to the antimicrobial activity. Shows a preferential cleavage at -Arg-Ser-Arg-Arg-|- and -Arg-Arg-Ser-Arg-|-, and of Z-Phe-Arg-|-aminomethylcoumarin sites. In Bubalus bubalis (Domestic water buffalo), this protein is Lactotransferrin (LTF).